The sequence spans 189 residues: RxLR effector protein CRE18 (189 aa).

The signal sequence occupies residues 1–23 (MSKLFYAFAVLAVHVLTSSPTTA). The RxLR-dEER signature appears at 47-68 (RFLRSIHEGEDSLKPSAFSEER).

It belongs to the RxLR effector family.

It localises to the secreted. The protein localises to the host cytoplasm. It is found in the host nucleus. Its function is as follows. Effector that is involved in host plant infection. Contributes to virulence during the early infection stage, by inhibiting plant defense responses induced by both PAMP-triggered immunity (PTI) and effector-triggered immunity (ETI). The protein is RxLR effector protein CRE18 of Phytophthora infestans (strain T30-4) (Potato late blight agent).